Reading from the N-terminus, the 56-residue chain is uncharacterized protein (56 aa).

Residues 33 to 53 traverse the membrane as a helical segment; it reads INIIYLAIMKIIMNIIMMIMI.

It is found in the host membrane. This is an uncharacterized protein from Bos taurus (Bovine).